The sequence spans 206 residues: Platelet glycoprotein Ib beta chain (206 aa).

An N-terminal signal peptide occupies residues 1-26 (MGSRPRGALSLLLLLLAPPSRPASGC). 2 disulfide bridges follow: cysteine 26–cysteine 32 and cysteine 30–cysteine 39. The region spanning 27–55 (PAPCRCSETRVDCGRRGLTWASLPAAFPP) is the LRRNT domain. Topologically, residues 27–150 (PAPCRCSETR…CAPGLLCWGA (124 aa)) are extracellular. The stretch at 60–83 (LVLTDNNLTALPPGLLDTLPALRR) is one LRR repeat. One can recognise an LRRCT domain in the interval 89-143 (NPWRCDCRLLPLRAWLAGRPEREFYRDLRCVAPLALRGRLLPYVAEDELRAACAP). Disulfide bonds link cysteine 93/cysteine 118 and cysteine 95/cysteine 141. Residues 151–171 (LVAQLALLVLGLLHALLLALL) traverse the membrane as a helical segment. The Cytoplasmic segment spans residues 172-206 (LSRLRRLRAQARARSTREFSLTAPLVAESAGGGAS). Serine 186 carries the post-translational modification Phosphoserine. Serine 191 carries the phosphoserine; by PKA modification. At threonine 193 the chain carries Phosphothreonine. Position 200 is a phosphoserine (serine 200).

In terms of assembly, two GP-Ib beta are disulfide-linked to one GP-Ib alpha. GP-IX is complexed with the GP-Ib heterodimer via a non covalent linkage. Interacts with TRAF4.

The protein localises to the membrane. Functionally, gp-Ib, a surface membrane protein of platelets, participates in the formation of platelet plugs by binding to von Willebrand factor, which is already bound to the subendothelium. This chain is Platelet glycoprotein Ib beta chain (Gp1bb), found in Rattus norvegicus (Rat).